A 273-amino-acid polypeptide reads, in one-letter code: Sanguinarine reductase (273 aa).

Serine 153 functions as the Proton donor in the catalytic mechanism. Substrate is bound by residues 157–161 (CDPDH) and lysine 175.

The protein belongs to the NAD(P)-dependent epimerase/dehydratase family. In terms of assembly, monomer.

It carries out the reaction dihydrosanguinarine + NADP(+) = sanguinarine + NADPH. It catalyses the reaction dihydrosanguinarine + NAD(+) = sanguinarine + NADH. The catalysed reaction is dihydrochelirubine + NAD(+) = chelirubine + NADH. The enzyme catalyses dihydrochelirubine + NADP(+) = chelirubine + NADPH. With respect to regulation, inhibited by iodoacetamide and irreversibly by its product, dihydrosanguinarine. In terms of biological role, catalyzes the reduction of benzophenanthridines, preferentially sanguinarine, to the corresponding dihydroalkaloids. Involved in detoxifying the phytoalexins produced by plant itself. The sanguinarine produced by intact cells upon elicitation, after excretion and binding to cell wall elements, is rapidly reabsorbed and reduced to the less toxic dihydrosanguinarine. Can work with both NAD(P) or NAD as a hydrogen donor, but at low concentrations, the reaction velocity with NAD(P)H is threefold higher than with NADH. However, chelerythrine shows maximum conversion rates with NADH. The substrate preference is sanguinarine &gt; chelerythrine &gt; chelirubine, macarpine or 10-OH-chelerythrine. No activity with berberine or phenanthridine cations. The chain is Sanguinarine reductase from Eschscholzia californica (California poppy).